Consider the following 315-residue polypeptide: Glycine--tRNA ligase alpha subunit (315 aa).

This sequence belongs to the class-II aminoacyl-tRNA synthetase family. Tetramer of two alpha and two beta subunits.

It localises to the cytoplasm. The enzyme catalyses tRNA(Gly) + glycine + ATP = glycyl-tRNA(Gly) + AMP + diphosphate. This Pseudomonas putida (strain ATCC 47054 / DSM 6125 / CFBP 8728 / NCIMB 11950 / KT2440) protein is Glycine--tRNA ligase alpha subunit.